The primary structure comprises 571 residues: Cerebral cavernous malformations 2 protein-like (571 aa).

3 disordered regions span residues 164–193 (AGVD…GTAE), 212–295 (AEAR…PQDP), and 544–571 (LAPD…DNYL). A compositionally biased stretch (basic and acidic residues) spans 184–193 (PEKRRVGTAE). Positions 212–223 (AEARAGGGGGGS) are enriched in gly residues. Positions 237–251 (WERRQTFSGSWERRH) are enriched in basic and acidic residues. A compositionally biased stretch (gly residues) spans 253–264 (GGGGGGGAGKPG). Pro residues predominate over residues 286 to 295 (GPNPLDPQDP). Over residues 545 to 555 (APDDDDDDEDE) the composition is skewed to acidic residues.

The protein belongs to the CCM2 family.

The protein is Cerebral cavernous malformations 2 protein-like (CCM2L) of Homo sapiens (Human).